A 352-amino-acid chain; its full sequence is MKKIVFTGGGSAGHVTPNLAIIPYLKEDNWDISYIGSHQGIEKTIIEKEDIPYYSIASGKLRRYFDLKNIKDPFLVMKGVMDAYVRIRKLKPDVIFSKGGFVSVPVVIGGWLNRVPVLLHESDMTPGLANKIALRFASKIFVTFEEAAKHLPKEKVIYTGSPVREEVLKGNREKALAFLGFSRKKPVITIMGGSLGAKKINETVREALPELLRKYQIVHLCGKGNLDDSLQNKEGYRQFEYVHGELPDILAITDFVISRAGSNAIFEFLTLQKPMLLIPLSKFASRGDQILNAESFERQGYASVLYEEDVTVNSLIKHVEELSHNNEAYNTALKKYNGKEAIQTIIHHISEA.

Residues Ser-11–Gly-13, Arg-164, Ser-194, and Gln-289 each bind UDP-N-acetyl-alpha-D-glucosamine.

This sequence belongs to the glycosyltransferase 28 family. MurG subfamily.

Its subcellular location is the cell membrane. The catalysed reaction is di-trans,octa-cis-undecaprenyl diphospho-N-acetyl-alpha-D-muramoyl-L-alanyl-D-glutamyl-meso-2,6-diaminopimeloyl-D-alanyl-D-alanine + UDP-N-acetyl-alpha-D-glucosamine = di-trans,octa-cis-undecaprenyl diphospho-[N-acetyl-alpha-D-glucosaminyl-(1-&gt;4)]-N-acetyl-alpha-D-muramoyl-L-alanyl-D-glutamyl-meso-2,6-diaminopimeloyl-D-alanyl-D-alanine + UDP + H(+). The protein operates within cell wall biogenesis; peptidoglycan biosynthesis. Functionally, cell wall formation. Catalyzes the transfer of a GlcNAc subunit on undecaprenyl-pyrophosphoryl-MurNAc-pentapeptide (lipid intermediate I) to form undecaprenyl-pyrophosphoryl-MurNAc-(pentapeptide)GlcNAc (lipid intermediate II). The protein is UDP-N-acetylglucosamine--N-acetylmuramyl-(pentapeptide) pyrophosphoryl-undecaprenol N-acetylglucosamine transferase 3 of Bacillus thuringiensis (strain Al Hakam).